Reading from the N-terminus, the 220-residue chain is Metalloproteinase inhibitor 2 (220 aa).

An N-terminal signal peptide occupies residues 1–26 (MGATARSLRLALGLLLLGTLPRGADA). Cys-27 is a Zn(2+) binding site. Involved in metalloproteinase-binding regions lie at residues 27-30 (CSCS) and 95-96 (SA). 6 cysteine pairs are disulfide-bonded: Cys-27–Cys-98, Cys-29–Cys-127, Cys-39–Cys-152, Cys-154–Cys-201, Cys-159–Cys-164, and Cys-172–Cys-193. The NTR domain occupies 27–152 (CSCSPVHPQQ…SLNHRYQMGC (126 aa)).

It belongs to the protease inhibitor I35 (TIMP) family. As to quaternary structure, interacts (via the C-terminal) with MMP2 (via the C-terminal PEX domain); the interaction inhibits the MMP2 activity. In terms of processing, the activity of TIMP2 is dependent on the presence of disulfide bonds. As to expression, predominantly expressed in the lung in alveolar macrophages and epithelial cells. Also found in brain, kidney, intestine, spleen and heart.

Its subcellular location is the secreted. Its function is as follows. Complexes with metalloproteinases (such as collagenases) and irreversibly inactivates them by binding to their catalytic zinc cofactor. The polypeptide is Metalloproteinase inhibitor 2 (TIMP2) (Cavia porcellus (Guinea pig)).